The chain runs to 1045 residues: Putative sodium-coupled neutral amino acid transporter 10 (1045 aa).

10 helical membrane passes run 8-28, 33-53, 85-105, 117-137, 150-170, 226-246, 269-289, 320-340, 342-362, and 375-395; these read LIMN…PFCF, ILLG…SCMF, SMIG…GDLG, VSEG…VLPL, FSAM…LSSF, IFAL…FFGY, MIRV…ILPC, ILTL…PNVE, ILGL…PALI, and FILG…LTVT. Basic and acidic residues-rich tracts occupy residues 412–453, 460–479, and 503–546; these read KEEK…EEQI, PQKE…RPDQ, and VDEK…DQAE. Disordered regions lie at residues 412–584 and 606–658; these read KEEK…EQPP and EIAE…AEAG. Polar residues predominate over residues 564–573; it reads NDPNKQQLVN. The segment covering 627–658 has biased composition (basic and acidic residues); it reads PIKDEKNEQIPGDPGKESHVEPKAEDNQAEAG.

The protein belongs to the amino acid/polyamine transporter 2 family.

It localises to the membrane. Functionally, putative sodium-dependent amino acid/proton antiporter. This Xenopus laevis (African clawed frog) protein is Putative sodium-coupled neutral amino acid transporter 10 (slc38a10).